Consider the following 238-residue polypeptide: 2-C-methyl-D-erythritol 4-phosphate cytidylyltransferase (238 aa).

The protein belongs to the IspD/TarI cytidylyltransferase family. IspD subfamily.

It catalyses the reaction 2-C-methyl-D-erythritol 4-phosphate + CTP + H(+) = 4-CDP-2-C-methyl-D-erythritol + diphosphate. The protein operates within isoprenoid biosynthesis; isopentenyl diphosphate biosynthesis via DXP pathway; isopentenyl diphosphate from 1-deoxy-D-xylulose 5-phosphate: step 2/6. Functionally, catalyzes the formation of 4-diphosphocytidyl-2-C-methyl-D-erythritol from CTP and 2-C-methyl-D-erythritol 4-phosphate (MEP). The polypeptide is 2-C-methyl-D-erythritol 4-phosphate cytidylyltransferase (Alteromonas mediterranea (strain DSM 17117 / CIP 110805 / LMG 28347 / Deep ecotype)).